The chain runs to 226 residues: Uracil-DNA glycosylase (226 aa).

Asp68 functions as the Proton acceptor in the catalytic mechanism.

Belongs to the uracil-DNA glycosylase (UDG) superfamily. UNG family.

It localises to the cytoplasm. It carries out the reaction Hydrolyzes single-stranded DNA or mismatched double-stranded DNA and polynucleotides, releasing free uracil.. Its function is as follows. Excises uracil residues from the DNA which can arise as a result of misincorporation of dUMP residues by DNA polymerase or due to deamination of cytosine. This chain is Uracil-DNA glycosylase, found in Mycobacteroides abscessus (strain ATCC 19977 / DSM 44196 / CCUG 20993 / CIP 104536 / JCM 13569 / NCTC 13031 / TMC 1543 / L948) (Mycobacterium abscessus).